A 332-amino-acid chain; its full sequence is Protein pbn1 (332 aa).

Topologically, residues 1–301 (MDLQRTNQDT…SIPIADLSYK (301 aa)) are lumenal. Residues N36, N56, N112, and N206 are each glycosylated (N-linked (GlcNAc...) asparagine). The helical transmembrane segment at 302–324 (HVVEWVTNGVAIFSFFYLLLYLW) threads the bilayer. Residues 325–332 (KRFRYAKD) lie on the Cytoplasmic side of the membrane.

This sequence belongs to the PIGX family.

The protein localises to the endoplasmic reticulum membrane. It participates in glycolipid biosynthesis; glycosylphosphatidylinositol-anchor biosynthesis. Its function is as follows. Required for proper folding and/or the stability of a subset of proteins in the endoplasmic reticulum. Component of glycosylphosphatidylinositol-mannosyltransferase 1 which transfers the first of the 4 mannoses in the GPI-anchor precursors during GPI-anchor biosynthesis. Probably acts by stabilizing the mannosyltransferase gpi14. The chain is Protein pbn1 (pbn1) from Schizosaccharomyces pombe (strain 972 / ATCC 24843) (Fission yeast).